The chain runs to 285 residues: Glutamate racemase (285 aa).

Substrate-binding positions include D28–S29 and Y60–G61. The active-site Proton donor/acceptor is C92. A substrate-binding site is contributed by N93–T94. C204 functions as the Proton donor/acceptor in the catalytic mechanism. T205–H206 contacts substrate.

This sequence belongs to the aspartate/glutamate racemases family.

The enzyme catalyses L-glutamate = D-glutamate. It functions in the pathway cell wall biogenesis; peptidoglycan biosynthesis. Its function is as follows. Provides the (R)-glutamate required for cell wall biosynthesis. The polypeptide is Glutamate racemase (Escherichia coli O7:K1 (strain IAI39 / ExPEC)).